The sequence spans 137 residues: Protein phosphatase 1 regulatory subunit 1B (137 aa).

The segment at 1–137 (DPKDRKKIQF…EEEEEEEDSQ (137 aa)) is disordered. Residue Thr33 is modified to Phosphothreonine; by PKA. A compositionally biased stretch (basic and acidic residues) spans 40–62 (LXEHSSPEEEASPHQRAAGEGHH). Residues Ser44 and Ser45 each carry the phosphoserine modification. Thr74 carries the post-translational modification Phosphothreonine; by CDK5. Residues 88 to 99 (HLQSISNLGENQ) are compositionally biased toward polar residues. Ser101 bears the Phosphoserine mark. Positions 108–117 (GELRELGYPR) are enriched in basic and acidic residues. A compositionally biased stretch (acidic residues) spans 118 to 137 (EEEEEEEEDDEEEEEEEDSQ). Phosphoserine is present on Ser136.

Belongs to the protein phosphatase inhibitor 1 family. In terms of processing, phosphorylation of Thr-33 is required for activity. Post-translationally, dopamine- and cyclic AMP-regulated neuronal phosphoprotein.

The protein resides in the cytoplasm. Its function is as follows. Inhibitor of protein-phosphatase 1. In Sus scrofa (Pig), this protein is Protein phosphatase 1 regulatory subunit 1B (PPP1R1B).